The chain runs to 269 residues: Transmembrane protein 41B (269 aa).

6 helical membrane-spanning segments follow: residues 30 to 50 (TSLL…FLVY), 87 to 107 (FYVQ…TFAI), 125 to 147 (LALF…LSYL), 175 to 195 (LINY…FINI), 203 to 223 (PLKV…FVAI), and 240 to 260 (SWNS…PALF). A VTT domain; required for its function in autophagy region spans residues 118–229 (GFLYPFPLAL…FVAIKAGTTL (112 aa)).

Belongs to the TMEM41 family.

It is found in the endoplasmic reticulum membrane. It localises to the endomembrane system. The enzyme catalyses a 1,2-diacyl-sn-glycero-3-phospho-L-serine(in) = a 1,2-diacyl-sn-glycero-3-phospho-L-serine(out). The catalysed reaction is cholesterol(in) = cholesterol(out). It carries out the reaction a 1,2-diacyl-sn-glycero-3-phosphocholine(in) = a 1,2-diacyl-sn-glycero-3-phosphocholine(out). It catalyses the reaction a 1,2-diacyl-sn-glycero-3-phosphoethanolamine(in) = a 1,2-diacyl-sn-glycero-3-phosphoethanolamine(out). In terms of biological role, phospholipid scramblase involved in lipid homeostasis and membrane dynamics processes. Has phospholipid scramblase activity toward cholesterol and phosphatidylserine, as well as phosphatidylethanolamine and phosphatidylcholine. Required for autophagosome formation: participates in early stages of autophagosome biogenesis at the endoplasmic reticulum (ER) membrane by reequilibrating the leaflets of the ER as lipids are extracted by ATG2 (ATG2A or ATG2B) to mediate autophagosome assembly. In addition to autophagy, involved in other processes in which phospholipid scramblase activity is required. Required for normal motor neuron development. In Gallus gallus (Chicken), this protein is Transmembrane protein 41B.